Reading from the N-terminus, the 1226-residue chain is Polyamine-transporting ATPase 13A3 (1226 aa).

Topologically, residues 1 to 28 (MDREERKTINQGQEDEMEIYGYNLSRWK) are cytoplasmic. Residues 29-49 (LAIVSLGVICSGGFLLLLLYW) lie within the membrane without spanning it. Over 50–205 (MPEWRVKATC…IAVKVPSVFK (156 aa)) the chain is Cytoplasmic. At serine 98 the chain carries Phosphoserine. Residues 206 to 226 (LLIKEVLNPFYIFQLFSVILW) form a helical membrane-spanning segment. Topologically, residues 227–232 (STDEYY) are lumenal. The chain crosses the membrane as a helical span at residues 233-253 (YYALAIVVMSIVSIVSSLYSI). Residues 254-409 (RKQYVMLHDM…KPTDFKLYRD (156 aa)) are Cytoplasmic-facing. Residues 410–430 (AYLFLLCLVAVAGIGFIYTII) traverse the membrane as a helical segment. Over 431 to 448 (NSILNEVQVGVIIIESLD) the chain is Lumenal. The helical transmembrane segment at 449–469 (IITITVPPALPAAMTAGIVYA) threads the bilayer. Topologically, residues 470–940 (QRRLKKIGIF…ALITSFCVFK (471 aa)) are cytoplasmic. The active-site 4-aspartylphosphate intermediate is the aspartate 498. Residues aspartate 498 and threonine 500 each coordinate Mg(2+). Residues 498 to 500 (DKT), phenylalanine 628, arginine 684, and aspartate 750 each bind ATP. Phosphoserine is present on serine 817. Mg(2+) contacts are provided by aspartate 883 and aspartate 887. 883–887 (DGAND) is an ATP binding site. The chain crosses the membrane as a helical span at residues 941 to 961 (FMALYSIIQYFSVTLLYSILS). Position 962 (asparagine 962) is a topological domain, lumenal. The chain crosses the membrane as a helical span at residues 963–983 (LGDFQFLFIDLAIILVVVFTM). The Cytoplasmic portion of the chain corresponds to 984–999 (SLNPAWKELVAQRPPS). A helical transmembrane segment spans residues 1000–1020 (GLISGALLFSVLSQIIICIGF). Residues 1021–1073 (QSLGFFWVKQQPWYEVWHPKSDACNTTGSGFWNSSHVDNETELDEHNIQNYEN) are Lumenal-facing. The helical transmembrane segment at 1074–1094 (TTVFFISSFQYLIVAIAFSKG) threads the bilayer. Residues 1095–1105 (KPFRQPCYKNY) lie on the Cytoplasmic side of the membrane. A helical membrane pass occupies residues 1106–1126 (FFVFSVIFLYIFILFIMLYPV). Residues 1127–1143 (ASVDQVLQIVCVPYQWR) are Lumenal-facing. Residues 1144-1164 (VTMLIIVLVNAFVSITVEESV) traverse the membrane as a helical segment. The Cytoplasmic portion of the chain corresponds to 1165–1226 (DRWGKCCLPW…NGSCQIITIT (62 aa)).

Belongs to the cation transport ATPase (P-type) (TC 3.A.3) family. Type V subfamily. In terms of tissue distribution, broadly expressed.

The protein localises to the recycling endosome membrane. Its subcellular location is the early endosome membrane. It localises to the late endosome membrane. It carries out the reaction putrescine(out) + ATP + H2O = putrescine(in) + ADP + phosphate + H(+). In terms of biological role, ATP-driven pump involved in endocytosis-dependent polyamine transport. Uses ATP as an energy source to transfer polyamine precursor putrescine from the endosomal compartment to the cytosol. This Homo sapiens (Human) protein is Polyamine-transporting ATPase 13A3.